The sequence spans 285 residues: MFKNYIEITKPGIIIGNSTLITGGFLFASRHAAFNYVLFIYTILGASLVIASACVFNNLIDIDIDKKMKRTSNRVLSKKLLPVFSVFNFAIFLGVLGLSILGCLVNFISMSLAVFGFFIYVVLYTMFYKRRSFYSTFIGSFSGSTPSVIGYTAVSNTIDICSILLFVIVIFWQMSHFYSISIMRIKDYREAKIPVFSVVKGVAITKKHIFFYVLNFSFFSSLFTFLGYLSYNFLLLSSIVNFYWSFLSYSNIKKNNDKKNARKLFYFSIIVIVFFNFLISIDVFF.

A run of 9 helical transmembrane segments spans residues 8–28 (ITKP…FLFA), 36–56 (YVLF…ACVF), 80–100 (LLPV…GLSI), 107–127 (FISM…YTMF), 133–153 (FYST…GYTA), 163–183 (ILLF…ISIM), 209–229 (IFFY…LGYL), 232–252 (NFLL…YSNI), and 265–285 (FYFS…DVFF).

The protein belongs to the UbiA prenyltransferase family. Protoheme IX farnesyltransferase subfamily.

The protein localises to the cell membrane. The enzyme catalyses heme b + (2E,6E)-farnesyl diphosphate + H2O = Fe(II)-heme o + diphosphate. The protein operates within porphyrin-containing compound metabolism; heme O biosynthesis; heme O from protoheme: step 1/1. Its function is as follows. Converts heme B (protoheme IX) to heme O by substitution of the vinyl group on carbon 2 of heme B porphyrin ring with a hydroxyethyl farnesyl side group. The chain is Protoheme IX farnesyltransferase from Buchnera aphidicola subsp. Acyrthosiphon pisum (strain Tuc7).